We begin with the raw amino-acid sequence, 382 residues long: Nuclear hormone receptor family member nhr-106 (382 aa).

Residues 2 to 78 (QTTCEICEVP…MGMMPEKVKV (77 aa)) constitute a DNA-binding region (nuclear receptor). 2 consecutive NR C4-type zinc fingers follow at residues 5-25 (CEIC…CRGC) and 42-61 (CKYS…CKSC). The region spanning 110–380 (DVSNLITRGL…FSNPEMFIDS (271 aa)) is the NR LBD domain.

This sequence belongs to the nuclear hormone receptor family.

The protein resides in the nucleus. Its function is as follows. Orphan nuclear receptor. The sequence is that of Nuclear hormone receptor family member nhr-106 (nhr-106) from Caenorhabditis elegans.